The chain runs to 569 residues: Ribonuclease J (569 aa).

Positions 81, 83, 85, 86, 150, and 172 each coordinate Zn(2+). 373–377 (HASGH) contacts substrate. A Zn(2+)-binding site is contributed by His-399.

Belongs to the metallo-beta-lactamase superfamily. RNA-metabolizing metallo-beta-lactamase-like family. Bacterial RNase J subfamily. In terms of assembly, homodimer, may be a subunit of the RNA degradosome. Zn(2+) is required as a cofactor.

It localises to the cytoplasm. An RNase that has 5'-3' exonuclease and possibly endoonuclease activity. Involved in maturation of rRNA and in some organisms also mRNA maturation and/or decay. This chain is Ribonuclease J, found in Mycoplasma pneumoniae (strain ATCC 29342 / M129 / Subtype 1) (Mycoplasmoides pneumoniae).